The sequence spans 921 residues: Isoleucine--tRNA ligase (921 aa).

The 'HIGH' region motif lies at 57 to 67 (PYANGDIHMGH). Glutamate 552 lines the L-isoleucyl-5'-AMP pocket. The 'KMSKS' region motif lies at 593–597 (KMSKS). Lysine 596 provides a ligand contact to ATP. 4 residues coordinate Zn(2+): cysteine 888, cysteine 891, cysteine 908, and cysteine 911.

It belongs to the class-I aminoacyl-tRNA synthetase family. IleS type 1 subfamily. As to quaternary structure, monomer. Requires Zn(2+) as cofactor.

The protein resides in the cytoplasm. It catalyses the reaction tRNA(Ile) + L-isoleucine + ATP = L-isoleucyl-tRNA(Ile) + AMP + diphosphate. Its function is as follows. Catalyzes the attachment of isoleucine to tRNA(Ile). As IleRS can inadvertently accommodate and process structurally similar amino acids such as valine, to avoid such errors it has two additional distinct tRNA(Ile)-dependent editing activities. One activity is designated as 'pretransfer' editing and involves the hydrolysis of activated Val-AMP. The other activity is designated 'posttransfer' editing and involves deacylation of mischarged Val-tRNA(Ile). In Bacillus cereus (strain G9842), this protein is Isoleucine--tRNA ligase.